The sequence spans 159 residues: Cyclic pyranopterin monophosphate synthase (159 aa).

Substrate is bound by residues 75 to 77 and 113 to 114; these read MCH and ME. Residue aspartate 128 is part of the active site.

The protein belongs to the MoaC family. As to quaternary structure, homohexamer; trimer of dimers.

The enzyme catalyses (8S)-3',8-cyclo-7,8-dihydroguanosine 5'-triphosphate = cyclic pyranopterin phosphate + diphosphate. The protein operates within cofactor biosynthesis; molybdopterin biosynthesis. Its function is as follows. Catalyzes the conversion of (8S)-3',8-cyclo-7,8-dihydroguanosine 5'-triphosphate to cyclic pyranopterin monophosphate (cPMP). This is Cyclic pyranopterin monophosphate synthase from Desulfatibacillum aliphaticivorans.